The primary structure comprises 88 residues: MDDADPEERNYDNMLKMLSDLNKDLEKLLEEMEKISVQATWMAYDMVVMRTNPTLAESMRRLEDAFVNCKEEMEKNWQELLHETKQRL.

The stretch at 7–75 forms a coiled coil; that stretch reads EERNYDNMLK…FVNCKEEMEK (69 aa).

Homodimer. Can form higher-order homooligomers. Interacts with SYCP1 (via tetrameric core); the interaction remodels SYCP1 homotetramers to 2:1 heterotrimers with SYCE3. SYCP1/SYCE3 heterotrimers form lattice assemblies as part of the mature synaptonemal complex via both lateral and head-to-head interactions. Interacts with the SYCE1-SIX6OS1 complex; the interaction recruits the SYCE1-SIX6OS1 complex to the central element of the synaptonemal complex. Interacts with the SYCE2-TEX12 complex; the interaction promotes fibrous assembly of SYCE2-TEX12 as part of the synaptonemal complex central element. Interacts with SYCE1. Interacts with SYCE2. Interacts with proteasome subunit PSMA8; to participate in meiosis progression during spermatogenesis. Interacts with SPO16.

The protein resides in the nucleus. Its subcellular location is the chromosome. Its function is as follows. Major component of the transverse central element of synaptonemal complexes (SCS), formed between homologous chromosomes during meiotic prophase. Required for the assembly of the central element of the synaptonemal complex during meiosis, via remodeling of SYCP1 lattice structures and promoting recruitment of SYCE2-TEX12 and SYCE1-SIX60S1 complexes. Required for chromosome loading of the central element-specific SCS proteins, and for initiating synapsis between homologous chromosomes. Chromosome loading appears to require SYCP1. Required for fertility and normal testis development. The polypeptide is Synaptonemal complex central element protein 3 (Homo sapiens (Human)).